Reading from the N-terminus, the 131-residue chain is Fumarate reductase subunit C (131 aa).

Helical transmembrane passes span 30 to 50 (EGTAVPAVWFSIELIFGLFAL), 57 to 77 (WMGFVGFLQNPVVVILNLIAL), and 109 to 129 (IIKGLWVVTAVVTVVILYVAL).

Belongs to the FrdC family. Part of an enzyme complex containing four subunits: a flavoprotein (FrdA), an iron-sulfur protein (FrdB), and two hydrophobic anchor proteins (FrdC and FrdD).

The protein resides in the cell inner membrane. Its function is as follows. Two distinct, membrane-bound, FAD-containing enzymes are responsible for the catalysis of fumarate and succinate interconversion; fumarate reductase is used in anaerobic growth, and succinate dehydrogenase is used in aerobic growth. Anchors the catalytic components of the fumarate reductase complex to the cell inner membrane, binds quinones. This chain is Fumarate reductase subunit C, found in Citrobacter koseri (strain ATCC BAA-895 / CDC 4225-83 / SGSC4696).